We begin with the raw amino-acid sequence, 266 residues long: F-box/kelch-repeat protein At4g39560 (266 aa).

Positions 24–70 constitute an F-box domain; sequence STQILSLPVDLLISILARVSRLDYPILSLVSKSFRSLIASPELYETR. Kelch repeat units follow at residues 130–176, 178–223, and 226–266; these read DIYN…VIDG, IYVA…KSAV, and EAIC…LLVA.

This chain is F-box/kelch-repeat protein At4g39560, found in Arabidopsis thaliana (Mouse-ear cress).